A 405-amino-acid polypeptide reads, in one-letter code: Palmitoyltransferase PFA5 (405 aa).

5 consecutive transmembrane segments (helical) span residues 12-32 (YIKL…NYAI), 51-71 (IILW…WVLI), 154-174 (LFFM…LIYC), 191-211 (FIVL…LFGI), and 310-330 (FYTL…FIDI). The DHHC domain occupies 111-161 (YYCSNSNSIKLERSFFSKDVGYNVIKFDHYCIWIGQPIGQDNYLFFMKFMM).

It belongs to the DHHC palmitoyltransferase family. PFA5 subfamily. Post-translationally, autopalmitoylated.

The protein localises to the membrane. It catalyses the reaction L-cysteinyl-[protein] + hexadecanoyl-CoA = S-hexadecanoyl-L-cysteinyl-[protein] + CoA. The polypeptide is Palmitoyltransferase PFA5 (PFA5) (Candida albicans (strain SC5314 / ATCC MYA-2876) (Yeast)).